A 312-amino-acid chain; its full sequence is Glyoxylate/hydroxypyruvate reductase A (312 aa).

Arg-227 is an active-site residue. Residue His-275 is the Proton donor of the active site.

The protein belongs to the D-isomer specific 2-hydroxyacid dehydrogenase family. GhrA subfamily.

Its subcellular location is the cytoplasm. The enzyme catalyses glycolate + NADP(+) = glyoxylate + NADPH + H(+). It carries out the reaction (R)-glycerate + NAD(+) = 3-hydroxypyruvate + NADH + H(+). It catalyses the reaction (R)-glycerate + NADP(+) = 3-hydroxypyruvate + NADPH + H(+). Its function is as follows. Catalyzes the NADPH-dependent reduction of glyoxylate and hydroxypyruvate into glycolate and glycerate, respectively. Inactive towards 2-oxo-D-gluconate, 2-oxoglutarate, oxaloacetate and pyruvate. Only D- and L-glycerate are involved in the oxidative activity with NADP. Activity with NAD is very low. This Escherichia coli (strain K12) protein is Glyoxylate/hydroxypyruvate reductase A (ghrA).